Here is a 212-residue protein sequence, read N- to C-terminus: Peptide methionine sulfoxide reductase MsrA (212 aa).

The segment covering 1–14 has biased composition (polar residues); sequence MSSIDKTQRITQSD. The tract at residues 1-21 is disordered; it reads MSSIDKTQRITQSDALPGRST. The active site involves Cys52.

The protein belongs to the MsrA Met sulfoxide reductase family.

It carries out the reaction L-methionyl-[protein] + [thioredoxin]-disulfide + H2O = L-methionyl-(S)-S-oxide-[protein] + [thioredoxin]-dithiol. The enzyme catalyses [thioredoxin]-disulfide + L-methionine + H2O = L-methionine (S)-S-oxide + [thioredoxin]-dithiol. Has an important function as a repair enzyme for proteins that have been inactivated by oxidation. Catalyzes the reversible oxidation-reduction of methionine sulfoxide in proteins to methionine. The chain is Peptide methionine sulfoxide reductase MsrA from Pectobacterium carotovorum subsp. carotovorum (strain PC1).